The following is a 347-amino-acid chain: Phosphoribosylformylglycinamidine cyclo-ligase (347 aa).

Belongs to the AIR synthase family.

It is found in the cytoplasm. The enzyme catalyses 2-formamido-N(1)-(5-O-phospho-beta-D-ribosyl)acetamidine + ATP = 5-amino-1-(5-phospho-beta-D-ribosyl)imidazole + ADP + phosphate + H(+). It functions in the pathway purine metabolism; IMP biosynthesis via de novo pathway; 5-amino-1-(5-phospho-D-ribosyl)imidazole from N(2)-formyl-N(1)-(5-phospho-D-ribosyl)glycinamide: step 2/2. This chain is Phosphoribosylformylglycinamidine cyclo-ligase, found in Syntrophus aciditrophicus (strain SB).